A 352-amino-acid polypeptide reads, in one-letter code: Mitochondrial ubiquitin ligase activator of NFKB 1 (352 aa).

At 1-8 (MESGGRPS) the chain is on the cytoplasmic side. Residues 9-29 (LCQFILLGTTSVVTAALYSVY) traverse the membrane as a helical segment. Residues 30–238 (RQKARVSQEL…LLQRQESSVR (209 aa)) are Mitochondrial intermembrane-facing. Residue Lys52 forms a Glycyl lysine isopeptide (Lys-Gly) (interchain with G-Cter in ubiquitin) linkage. Residues 239–259 (LWKVLALVFGFATCATLFFIL) traverse the membrane as a helical segment. Over 260 to 352 (RKQYLQRQER…ITRVIPLYNS (93 aa)) the chain is Cytoplasmic. Residues Lys273 and Lys299 each participate in a glycyl lysine isopeptide (Lys-Gly) (interchain with G-Cter in ubiquitin) cross-link. The RING-type zinc finger occupies 302 to 340 (CVVCLSSFKSCVFLECGHVCSCTECYRALPEPKKCPICR).

In terms of assembly, homooligomer. Interacts with MAP3K7/TAK1. Interacts with UBC9. Interacts with and sumoylates DNM1L. Interacts with MAVS. Interacts with TP53 (via N-terminus); the interaction leads to ubiquitination and proteasomal degradation of TP53. Ubiquitinated by PRKN during mitophagy, leading to its degradation and enhancement of mitophagy. Deubiquitinated by USP30. Widely expressed with highest levels in the heart, skeletal muscle, placenta, kidney and liver. Barely detectable in colon and thymus.

The protein resides in the mitochondrion outer membrane. The protein localises to the peroxisome. It catalyses the reaction S-ubiquitinyl-[E2 ubiquitin-conjugating enzyme]-L-cysteine + [acceptor protein]-L-lysine = [E2 ubiquitin-conjugating enzyme]-L-cysteine + N(6)-ubiquitinyl-[acceptor protein]-L-lysine.. It functions in the pathway protein modification; protein ubiquitination. Its pathway is protein modification; protein sumoylation. Its function is as follows. Exhibits weak E3 ubiquitin-protein ligase activity. E3 ubiquitin ligases accept ubiquitin from an E2 ubiquitin-conjugating enzyme in the form of a thioester and then directly transfer the ubiquitin to targeted substrates. Can ubiquitinate AKT1 preferentially at 'Lys-284' involving 'Lys-48'-linked polyubiquitination and seems to be involved in regulation of Akt signaling by targeting phosphorylated Akt to proteasomal degradation. Mediates polyubiquitination of cytoplasmic TP53 at 'Lys-24' which targets TP53 for proteasomal degradation, thus reducing TP53 levels in the cytoplasm and mitochondrion. Proposed to preferentially act as a SUMO E3 ligase at physiological concentrations. Plays a role in the control of mitochondrial morphology by promoting mitochondrial fragmentation, and influences mitochondrial localization. Likely to promote mitochondrial fission through negatively regulating the mitochondrial fusion proteins MFN1 and MFN2, acting in a pathway that is parallel to the PRKN/PINK1 regulatory pathway. May also be involved in the sumoylation of the membrane fission protein DNM1L. Inhibits cell growth. When overexpressed, activates JNK through MAP3K7/TAK1 and induces caspase-dependent apoptosis. Involved in the modulation of innate immune defense against viruses by inhibiting RIGI-dependent antiviral response. Can mediate RIGI sumoylation and disrupt its polyubiquitination. This Homo sapiens (Human) protein is Mitochondrial ubiquitin ligase activator of NFKB 1 (MUL1).